Consider the following 431-residue polypeptide: Tyrosine--tRNA ligase (431 aa).

Tyr33 serves as a coordination point for L-tyrosine. Residues 38 to 47 carry the 'HIGH' region motif; it reads PTADSLHIGS. L-tyrosine is bound by residues Tyr172 and Gln176. The 'KMSKS' region signature appears at 234–238; it reads KFGKS. Lys237 contributes to the ATP binding site. Residues 364–431 enclose the S4 RNA-binding domain; it reads INIVEVLNEK…KKNYFVLNVK (68 aa).

The protein belongs to the class-I aminoacyl-tRNA synthetase family. TyrS type 1 subfamily. As to quaternary structure, homodimer.

It localises to the cytoplasm. It carries out the reaction tRNA(Tyr) + L-tyrosine + ATP = L-tyrosyl-tRNA(Tyr) + AMP + diphosphate + H(+). Catalyzes the attachment of tyrosine to tRNA(Tyr) in a two-step reaction: tyrosine is first activated by ATP to form Tyr-AMP and then transferred to the acceptor end of tRNA(Tyr). The sequence is that of Tyrosine--tRNA ligase from Flavobacterium psychrophilum (strain ATCC 49511 / DSM 21280 / CIP 103535 / JIP02/86).